Reading from the N-terminus, the 632-residue chain is Cyclic GMP-AMP synthase-like receptor 2 (632 aa).

Residues aspartate 71, aspartate 73, and aspartate 181 each coordinate Mg(2+). Aspartate 295 contributes to the Mn(2+) binding site.

It belongs to the mab-21 family. Mg(2+) serves as cofactor. It depends on Mn(2+) as a cofactor.

In terms of biological role, nucleotidyltransferase that catalyzes the formation of some cyclic nucleotide and plays a key role in innate immunity. Directly binds some unknown ligand, activating the nucleotidyltransferase activity, leading to synthesis of a second messenger that binds to and activates Sting, thereby triggering the immune response via activation of the NF-kappa-B transcription factor. The polypeptide is Cyclic GMP-AMP synthase-like receptor 2 (Crassostrea virginica (Eastern oyster)).